A 152-amino-acid chain; its full sequence is Toxin Res (152 aa).

Belongs to the MbcT/ParT/Res family. In terms of assembly, homodimer. Forms a complex with cognate antitoxin Xre.

Its function is as follows. Toxic component of a type II toxin-antitoxin (TA) system. Expression in E.coli inhibits cell growth; bacteriostasis is neutralized by expression of cognate antitoxin Xre. Probably depletes intracellular NAD(+). The protein is Toxin Res of Yersinia enterocolitica serotype O:8 / biotype 1B (strain NCTC 13174 / 8081).